The following is a 273-amino-acid chain: Large ribosomal subunit protein uL2cz/uL2cy (273 aa).

2 disordered regions span residues 1–25 and 225–253; these read MAKH…VKSN and PVDH…YPAL.

The protein belongs to the universal ribosomal protein uL2 family. Part of the 50S ribosomal subunit.

Its subcellular location is the plastid. The protein localises to the chloroplast. This chain is Large ribosomal subunit protein uL2cz/uL2cy (rpl2-A), found in Triticum aestivum (Wheat).